The sequence spans 392 residues: MAAVAAFAGWLLRLRAAGADGPWRRLCGAGLSRGFLQSASAYGAAAQRRQVAHFTFQPDPEPVEYGQTQKMNLFQAVTSALDNSLAKDPTAVIFGEDVAFGGVFRCTVGLRDKYGKDRVFNTPLCEQGIVGFGIGIAVTGATAIAEIQFADYIFPAFDQIVNEAAKYRYRSGDLFNCGSLTIRSPWGCVGHGALYHSQSPEAFFAHCPGIKVVVPRSPFQAKGLLLSCIEDKNPCIFFEPKILYRAAVEQVPVEPYNIPLSQAEVIQEGSDVTLVAWGTQVHVIREVAAMAQEKLGVSCEVIDLRTILPWDVDTVCKSVIKTGRLLVSHEAPLTGGFASEISSTVQEECFLNLEAPISRVCGYDTPFPHIFEPFYIPDKWKCYDALRKMINY.

The N-terminal 50 residues, 1–50, are a transit peptide targeting the mitochondrion; that stretch reads MAAVAAFAGWLLRLRAAGADGPWRRLCGAGLSRGFLQSASAYGAAAQRRQ. Tyr-152 serves as a coordination point for thiamine diphosphate. 5 residues coordinate K(+): Gly-178, Leu-180, Thr-181, Cys-228, and Asp-231. Lys-232 is modified (N6-acetyllysine). Asn-233 provides a ligand contact to K(+). N6-acetyllysine is present on Lys-241.

Heterotetramer of 2 alpha/BCKDHA and 2 beta chains/BCKDHB that forms the branched-chain alpha-keto acid decarboxylase (E1) component of the BCKD complex. The branched-chain alpha-ketoacid dehydrogenase is a large complex composed of three major building blocks E1, E2 and E3. It is organized around E2, a 24-meric cubic core composed of DBT, to which are associated 6 to 12 copies of E1, and approximately 6 copies of the dehydrogenase E3, a DLD dimer. Thiamine diphosphate is required as a cofactor.

The protein resides in the mitochondrion matrix. It carries out the reaction N(6)-[(R)-lipoyl]-L-lysyl-[protein] + 3-methyl-2-oxobutanoate + H(+) = N(6)-[(R)-S(8)-2-methylpropanoyldihydrolipoyl]-L-lysyl-[protein] + CO2. Together with BCKDHA forms the heterotetrameric E1 subunit of the mitochondrial branched-chain alpha-ketoacid dehydrogenase (BCKD) complex. The BCKD complex catalyzes the multi-step oxidative decarboxylation of alpha-ketoacids derived from the branched-chain amino-acids valine, leucine and isoleucine producing CO2 and acyl-CoA which is subsequently utilized to produce energy. The E1 subunit catalyzes the first step with the decarboxylation of the alpha-ketoacid forming an enzyme-product intermediate. A reductive acylation mediated by the lipoylamide cofactor of E2 extracts the acyl group from the E1 active site for the next step of the reaction. The chain is 2-oxoisovalerate dehydrogenase subunit beta, mitochondrial (BCKDHB) from Bos taurus (Bovine).